The chain runs to 411 residues: LL-diaminopimelate aminotransferase (411 aa).

Substrate contacts are provided by Tyr-15 and Gly-42. Pyridoxal 5'-phosphate is bound by residues Tyr-72, 108–109 (AK), Tyr-132, Asn-188, Tyr-219, and 247–249 (SFS). Residues Lys-109, Tyr-132, and Asn-188 each coordinate substrate. The residue at position 250 (Lys-250) is an N6-(pyridoxal phosphate)lysine. 2 residues coordinate pyridoxal 5'-phosphate: Arg-258 and Asn-293. Substrate contacts are provided by Asn-293 and Arg-389.

Belongs to the class-I pyridoxal-phosphate-dependent aminotransferase family. LL-diaminopimelate aminotransferase subfamily. In terms of assembly, homodimer. The cofactor is pyridoxal 5'-phosphate.

The enzyme catalyses (2S,6S)-2,6-diaminopimelate + 2-oxoglutarate = (S)-2,3,4,5-tetrahydrodipicolinate + L-glutamate + H2O + H(+). Its pathway is amino-acid biosynthesis; L-lysine biosynthesis via DAP pathway; LL-2,6-diaminopimelate from (S)-tetrahydrodipicolinate (aminotransferase route): step 1/1. Involved in the synthesis of meso-diaminopimelate (m-DAP or DL-DAP), required for both lysine and peptidoglycan biosynthesis. Catalyzes the direct conversion of tetrahydrodipicolinate to LL-diaminopimelate. Is also able to catalyze the reverse reaction in vitro, i.e. the transamination of LL-diaminopimelate with 2-oxoglutarate to produce tetrahydrodipicolinate and glutamate. Can also use m-DAP instead of LL-DAP as the amino-group donor, and oxaloacetate or pyruvate as the amino-group acceptor. This is LL-diaminopimelate aminotransferase from Desulfitobacterium hafniense (strain DSM 10664 / DCB-2).